A 186-amino-acid chain; its full sequence is Ribosome-recycling factor (186 aa).

This sequence belongs to the RRF family.

It is found in the cytoplasm. Its function is as follows. Responsible for the release of ribosomes from messenger RNA at the termination of protein biosynthesis. May increase the efficiency of translation by recycling ribosomes from one round of translation to another. The sequence is that of Ribosome-recycling factor from Amoebophilus asiaticus (strain 5a2).